We begin with the raw amino-acid sequence, 204 residues long: UPF0228 protein MA_0511 (204 aa).

Belongs to the UPF0228 family.

The chain is UPF0228 protein MA_0511 from Methanosarcina acetivorans (strain ATCC 35395 / DSM 2834 / JCM 12185 / C2A).